We begin with the raw amino-acid sequence, 344 residues long: Arginine N-succinyltransferase (344 aa).

Leucine 125 lines the succinyl-CoA pocket. Histidine 229 (proton donor) is an active-site residue.

The protein belongs to the arginine N-succinyltransferase family.

It carries out the reaction succinyl-CoA + L-arginine = N(2)-succinyl-L-arginine + CoA + H(+). Its pathway is amino-acid degradation; L-arginine degradation via AST pathway; L-glutamate and succinate from L-arginine: step 1/5. Functionally, catalyzes the transfer of succinyl-CoA to arginine to produce N(2)-succinylarginine. In Escherichia coli O157:H7, this protein is Arginine N-succinyltransferase.